A 101-amino-acid polypeptide reads, in one-letter code: Small ribosomal subunit protein uS10 (101 aa).

This sequence belongs to the universal ribosomal protein uS10 family. As to quaternary structure, part of the 30S ribosomal subunit.

In terms of biological role, involved in the binding of tRNA to the ribosomes. The polypeptide is Small ribosomal subunit protein uS10 (Anaeromyxobacter dehalogenans (strain 2CP-C)).